Consider the following 369-residue polypeptide: Superinfection exclusion protein (369 aa).

The signal sequence occupies residues 1 to 15 (MIALLILSLTCSVST).

This sequence belongs to the serpin family. Orthopoxvirus OPG040 subfamily. In terms of assembly, interacts with OPG185/A56 protein.

It localises to the virion membrane. It is found in the host cell membrane. In terms of biological role, negatively regulates superinfection and syncytium formation in infected host cells. Acts in concert with OPG185/A56 protein at the host cell membrane by interacting with and inhibiting the mature virion entry/fusion complex (EFC). This mechanism ensures that new virions released from the cell cannot enter already infected cells. This is Superinfection exclusion protein (OPG040) from Vaccinia virus (strain Western Reserve) (VACV).